The sequence spans 125 residues: Small ribosomal subunit protein uS13 (125 aa).

This sequence belongs to the universal ribosomal protein uS13 family. As to quaternary structure, part of the 30S ribosomal subunit. Forms a loose heterodimer with protein S19. Forms two bridges to the 50S subunit in the 70S ribosome.

Located at the top of the head of the 30S subunit, it contacts several helices of the 16S rRNA. In the 70S ribosome it contacts the 23S rRNA (bridge B1a) and protein L5 of the 50S subunit (bridge B1b), connecting the 2 subunits; these bridges are implicated in subunit movement. Contacts the tRNAs in the A and P-sites. The protein is Small ribosomal subunit protein uS13 of Rickettsia africae (strain ESF-5).